Here is a 125-residue protein sequence, read N- to C-terminus: Holo-[acyl-carrier-protein] synthase (125 aa).

2 residues coordinate Mg(2+): aspartate 8 and glutamate 57.

Belongs to the P-Pant transferase superfamily. AcpS family. The cofactor is Mg(2+).

Its subcellular location is the cytoplasm. The enzyme catalyses apo-[ACP] + CoA = holo-[ACP] + adenosine 3',5'-bisphosphate + H(+). In terms of biological role, transfers the 4'-phosphopantetheine moiety from coenzyme A to a Ser of acyl-carrier-protein. This Blochmanniella pennsylvanica (strain BPEN) protein is Holo-[acyl-carrier-protein] synthase.